Consider the following 297-residue polypeptide: tRNA (guanine(37)-N(1))/4-demethylwyosine(37)-methyltransferase Taw22 (297 aa).

S-adenosyl-L-methionine is bound by residues R89, F106, and 128–129; that span reads EL.

This sequence belongs to the class I-like SAM-binding methyltransferase superfamily. TRM5/TYW2 family.

Its subcellular location is the cytoplasm. The catalysed reaction is guanosine(37) in tRNA + S-adenosyl-L-methionine = N(1)-methylguanosine(37) in tRNA + S-adenosyl-L-homocysteine + H(+). It catalyses the reaction 4-demethylwyosine(37) in tRNA(Phe) + S-adenosyl-L-methionine = isowyosine(37) in tRNA(Phe) + S-adenosyl-L-homocysteine + H(+). Catalyzes both the N1-methylation of guanosine and the C7-methylation of 4-demethylwyosine (imG-14) at position 37 in tRNA(Phe). This chain is tRNA (guanine(37)-N(1))/4-demethylwyosine(37)-methyltransferase Taw22, found in Nanoarchaeum equitans (strain Kin4-M).